We begin with the raw amino-acid sequence, 490 residues long: CUGBP Elav-like family member 1 (490 aa).

2 consecutive RRM domains span residues 16 to 99 and 108 to 188; these read IKMF…PADS and RKLF…FADT. Residues 283-312 form a disordered region; the sequence is PSAGSALTTSSSPLSILTSSGSSPSSNNNS. The RRM 3 domain maps to 405-483; the sequence is ANLFIYHLPQ…KRLKVQLKRS (79 aa).

It belongs to the CELF/BRUNOL family. In terms of assembly, oligomer. Oligomerization is required for RNA-binding and EDEN-dependent deadenylation. Post-translationally, phosphorylated during oocyte maturation and dephosphorylated following egg activation. Dephosphorylation is calcium dependent and correlates with the increase in the activity of EDEN-dependent deadenylation.

The protein resides in the nucleus. The protein localises to the cytoplasm. Functionally, RNA-binding protein implicated in the regulation of several post-transcriptional events. May be involved in pre-mRNA alternative splicing, mRNA translation activation and stability. Mediates the rapid and sequence-specific cytoplasmic deadenylation of EDEN-containing maternal mRNAs following fertilization. Binds to AU-rich sequences (AREs) of jun mRNA. Binds to the embryonic deadenylation element (EDEN) motif localized in the 3'-UTR of maternal mRNAs. Binds to RNA containing several repeats of the consensus sequence 5'-UGU-3'. EDEN-dependent deadenylation is enhanced by the presence of an additional cis element composed of three AUU repeats. The polypeptide is CUGBP Elav-like family member 1 (celf1) (Xenopus tropicalis (Western clawed frog)).